Consider the following 153-residue polypeptide: Aspartate carbamoyltransferase regulatory chain (153 aa).

Residues Cys-109, Cys-114, Cys-138, and Cys-141 each contribute to the Zn(2+) site.

It belongs to the PyrI family. As to quaternary structure, contains catalytic and regulatory chains. Zn(2+) serves as cofactor.

In terms of biological role, involved in allosteric regulation of aspartate carbamoyltransferase. The chain is Aspartate carbamoyltransferase regulatory chain from Vibrio parahaemolyticus serotype O3:K6 (strain RIMD 2210633).